The primary structure comprises 214 residues: Protein FAM167A (214 aa).

2 disordered regions span residues 1–26 (MSVP…PDDH) and 59–108 (PFPR…LSTG). The stretch at 118–156 (EAIAWLRKELTEMRLQDQQLARQLMRLRGDINKLKIEHT) forms a coiled coil.

Belongs to the FAM167 (SEC) family. In terms of tissue distribution, expressed in skin, including primary keratinocytes, spleen, kidney, leukocytes, testis, lung, small intestine and prostate.

This Homo sapiens (Human) protein is Protein FAM167A (FAM167A).